Here is a 152-residue protein sequence, read N- to C-terminus: Small ribosomal subunit protein uS15 (152 aa).

It belongs to the universal ribosomal protein uS15 family. In terms of assembly, part of the 30S ribosomal subunit.

In Saccharolobus solfataricus (strain ATCC 35092 / DSM 1617 / JCM 11322 / P2) (Sulfolobus solfataricus), this protein is Small ribosomal subunit protein uS15.